A 539-amino-acid chain; its full sequence is Tyrosine-protein kinase csk-1 (539 aa).

Residues serine 43 to glycine 110 enclose the SH3 domain. Residues proline 129–histidine 148 are disordered. The segment covering alanine 131–alanine 146 has biased composition (low complexity). The region spanning tryptophan 151 to isoleucine 241 is the SH2 domain. The Protein kinase domain maps to isoleucine 283–isoleucine 535. ATP is bound by residues isoleucine 289–valine 297 and lysine 310. Aspartate 403 functions as the Proton acceptor in the catalytic mechanism.

Belongs to the protein kinase superfamily. Tyr protein kinase family. CSK subfamily. The cofactor is Mg(2+). Mn(2+) serves as cofactor. Expressed predominantly in pharyngeal muscles in procorpus, metacorpus and terminal bulb. Expressed also in some neurons (ASE, ADF, AVA, AUA, RMDV and BAG) in the head region, anchor cell, vulva, cells around anus, body wall muscle and gondal distal tip cells.

The enzyme catalyses L-tyrosyl-[protein] + ATP = O-phospho-L-tyrosyl-[protein] + ADP + H(+). Non-receptor tyrosine-protein kinase which plays a role in pharynx function by regulating pumping and the orientation of pharyngeal muscle fibers, independently of src-1 and src-2. May phosphorylate and thereby negatively regulate src-1 and src-2 activities. The polypeptide is Tyrosine-protein kinase csk-1 (Caenorhabditis elegans).